The primary structure comprises 372 residues: Glutamate 5-kinase (372 aa).

Lys-14 contacts ATP. Positions 54, 141, and 153 each coordinate substrate. Residue 173 to 174 participates in ATP binding; that stretch reads TD. Positions 280–358 constitute a PUA domain; that stretch reads RGHVVIDAGA…GEIESVLGYM (79 aa).

It belongs to the glutamate 5-kinase family.

The protein resides in the cytoplasm. It carries out the reaction L-glutamate + ATP = L-glutamyl 5-phosphate + ADP. The protein operates within amino-acid biosynthesis; L-proline biosynthesis; L-glutamate 5-semialdehyde from L-glutamate: step 1/2. Catalyzes the transfer of a phosphate group to glutamate to form L-glutamate 5-phosphate. The protein is Glutamate 5-kinase of Burkholderia multivorans (strain ATCC 17616 / 249).